The following is an 883-amino-acid chain: MIPLLLSLLAALVLTQAPAALADDLKEDSSEDRAFRVRIGATQLRGVLGGALAIPCHVHHLRPPHSRRAAPGFPRVKWTFLSGDREVEVLVARGLRVKVNEAYRFRVALPAYPASLTDVSLVLSELRPNDSGVYRCEVQHGIDDSSDAVEVKVKGVVFLYREGSARYAFSFAGAQEACARIGARIATPEQLYAAYLGGYEQCDAGWLSDQTVRYPIQNPREACSGDMDGYPGVRNYGVVGPDDLYDVYCYAEDLNGELFLGAPPSKLTWEEARDYCLERGAQIASTGQLYAAWNGGLDRCSPGWLADGSVRYPIITPSQRCGGGLPGVKTLFLFPNQTGFPSKQNRFNVYCFRDSAHPSASSEASSPASDGLEAIVTVTEKLEELQLPQEAMESESRGAIYSIPISEDGGGGSSTPEDPAEAPRTPLESETQSIAPPTESSEEEGVALEEEERFKDLEALEEEKEQEDLWVWPRELSSPLPTGSETEHSLSQVSPPAQAVLQLGASPSPGPPRVRGPPAETLLPPREGSPTSTPGGAREVGGETGSPELSGVPRESEEAGSSSLEDGPSLLPATWAPVGPRELETPSEEKSGRTVLAGTSVQAQPVLPTDSASHGGVAVAPSSGDCIPSPCHNGGTCLEEKEGFRCLCLPGYGGDLCDVGLHFCSPGWEAFQGACYKHFSTRRSWEEAESQCRALGAHLTSICTPEEQDFVNDRYREYQWIGLNDRTIEGDFLWSDGAPLLYENWNPGQPDSYFLSGENCVVMVWHDQGQWSDVPCNYHLSYTCKMGLVSCGPPPQLPLAQIFGRPRLRYAVDTVLRYRCRDGLAQRNLPLIRCQENGLWEAPQISCVPRRPGRALRSMDAPEGPRGQLSRHRKAPLTPPSSL.

Positions 1-22 are cleaved as a signal peptide; the sequence is MIPLLLSLLAALVLTQAPAALA. The region spanning 35-154 is the Ig-like V-type domain; sequence FRVRIGATQL…SSDAVEVKVK (120 aa). 5 cysteine pairs are disulfide-bonded: C56–C136, C178–C249, C202–C223, C276–C351, and C300–C321. An N-linked (GlcNAc...) asparagine glycan is attached at N129. 2 Link domains span residues 156–251 and 256–353; these read VVFL…YCYA and GELF…YCFR. Phosphoserine is present on S224. A glycan (N-linked (GlcNAc...) asparagine) is linked at N336. The tract at residues 402–592 is disordered; it reads SIPISEDGGG…LETPSEEKSG (191 aa). A Phosphoserine modification is found at S413. The O-linked (Xyl...) (chondroitin sulfate) serine glycan is linked to S413. 2 stretches are compositionally biased toward acidic residues: residues 440 to 451 and 459 to 468; these read SSEEEGVALEEE and ALEEEKEQED. Positions 479 to 495 are enriched in polar residues; sequence PLPTGSETEHSLSQVSP. The span at 581–592 shows a compositional bias: basic and acidic residues; it reads RELETPSEEKSG. The EGF-like domain maps to 622-658; it reads SSGDCIPSPCHNGGTCLEEKEGFRCLCLPGYGGDLCD. Cystine bridges form between C626–C637, C631–C646, C648–C657, C664–C675, C692–C784, C760–C776, C791–C834, and C820–C847. In terms of domain architecture, C-type lectin spans 658 to 786; that stretch reads DVGLHFCSPG…NYHLSYTCKM (129 aa). Positions 789–849 constitute a Sushi domain; that stretch reads VSCGPPPQLP…WEAPQISCVP (61 aa). The interval 854 to 883 is disordered; that stretch reads RALRSMDAPEGPRGQLSRHRKAPLTPPSSL.

Belongs to the aggrecan/versican proteoglycan family. As to quaternary structure, interacts with TNR. In terms of processing, O-glycosylated; contains chondroitin sulfate. Expressed in the retina, specifically around the inner and outer segments of photoreceptors, retinal pigment epithelium, outer plexiform layer, and the ganglion cell layer (at protein level). Brain. Expressed in the brainstem and cerebellum in a perineuronal net pattern.

The protein resides in the secreted. It localises to the extracellular space. It is found in the extracellular matrix. Functionally, may play a role in the terminally differentiating and the adult nervous system during postnatal development. Could stabilize interactions between hyaluronan (HA) and brain proteoglycans. This is Brevican core protein (Bcan) from Mus musculus (Mouse).